Here is a 491-residue protein sequence, read N- to C-terminus: Cell division control protein 1 (491 aa).

The tract at residues Met1–Lys33 is disordered. Over Met1 to Arg39 the chain is Cytoplasmic. Basic residues predominate over residues Tyr24–Lys33. The helical transmembrane segment at Leu40–Tyr60 threads the bilayer. The Extracellular segment spans residues Tyr61–Ala391. Asp95, Asp144, Asn183, and His323 together coordinate a divalent metal cation. Residues Ile392–Phe412 form a helical membrane-spanning segment. Residues Pro413–Ser465 lie on the Cytoplasmic side of the membrane. A helical membrane pass occupies residues Ile466–Tyr486. At Phe487–Val491 the chain is on the extracellular side.

This sequence belongs to the metallophosphoesterase superfamily. MPPE1 family. The cofactor is a divalent metal cation.

The protein resides in the membrane. In terms of biological role, probable metallophosphoesterase which may participate in recombinational repair of double -strand breaks. The polypeptide is Cell division control protein 1 (CDC1) (Saccharomyces cerevisiae (strain ATCC 204508 / S288c) (Baker's yeast)).